The chain runs to 732 residues: MDTSGHFHDSGVGDLDEDPKCPCPSSGDEQQQQQQPPPPPAPPAVPQQPPGPLLQPQPPQPQQQQSQQQQQQQSQQQQQQAPLHPLPQLAQLQSQLVHPGLLHSSPTAFRAPTSANSTAILHPSSRQGSQLNLNDHLLGHSPSSTATSGPGGGSRHRQASPLVHRRDSNPFTEIAMSSCKYSGGVMKPLSRLSASRRNLIEAEPEGQPLQLFSPSNPPEIIISSREDNHAHQTLLHHPNATHNHQHAGTTAGSTTFPKANKRKNQNIGYKLGHRRALFEKRKRLSDYALIFGMFGIVVMVIETELSWGLYSKDSMFSLALKCLISLSTVILLGLIIAYHTREVQLFVIDNGADDWRIAMTYERILYISLEMLVCAIHPIPGEYKFFWTARLAFSYTPSRAEADVDIILSIPMFLRLYLIARVMLLHSKLFTDASSRSIGALNKINFNTRFVMKTLMTICPGTVLLVFSISLWIIAAWTVRVCERYHDQQDVTSNFLGAMWLISITFLSIGYGDMVPHTYCGKGVCLLTGIMGAGCTALVVAVVARKLELTKAEKHVHNFMMDTQLTKRIKNAAANVLRETWLIYKHTKLLKKIDHAKVRKHQRKFLQAIHQLRGVKMEQRKLSDQANTLVDLSKMQNVMYDLITELNDRSEDLEKQIGSLESKLEHLTASFNSLPLLIADTLRQQQQQLLTAFVEARGISVAVGTSHAPPSDSPIGISSTSFPTPYTSSSSC.

Residues 1-11 (MDTSGHFHDSG) are compositionally biased toward basic and acidic residues. Disordered regions lie at residues 1 to 82 (MDTS…QQAP) and 119 to 161 (AILH…QASP). A compositionally biased stretch (pro residues) spans 35-61 (QPPPPPAPPAVPQQPPGPLLQPQPPQP). Residues 62–82 (QQQQSQQQQQQQSQQQQQQAP) are compositionally biased toward low complexity. Positions 119 to 133 (AILHPSSRQGSQLNL) are enriched in polar residues. Over residues 139 to 148 (GHSPSSTATS) the composition is skewed to low complexity. Phosphoserine is present on S168. Positions 241 to 257 (THNHQHAGTTAGSTTFP) are enriched in polar residues. A disordered region spans residues 241 to 260 (THNHQHAGTTAGSTTFPKAN). The helical transmembrane segment at 289 to 309 (LIFGMFGIVVMVIETELSWGL) threads the bilayer. A helical membrane pass occupies residues 316–336 (FSLALKCLISLSTVILLGLII). Residues 367 to 387 (ISLEMLVCAIHPIPGEYKFFW) traverse the membrane as a helical segment. Residues 406–426 (IILSIPMFLRLYLIARVMLLH) form a helical membrane-spanning segment. A helical transmembrane segment spans residues 455 to 475 (LMTICPGTVLLVFSISLWIIA). An intramembrane region (pore-forming) is located at residues 495 to 515 (FLGAMWLISITFLSIGYGDMV). A helical transmembrane segment spans residues 524-544 (VCLLTGIMGAGCTALVVAVVA). Residues 562-638 (DTQLTKRIKN…LVDLSKMQNV (77 aa)) are calmodulin-binding. Positions 643–670 (ITELNDRSEDLEKQIGSLESKLEHLTAS) form a coiled coil. Residues 704-732 (GTSHAPPSDSPIGISSTSFPTPYTSSSSC) are disordered. The segment covering 718-732 (SSTSFPTPYTSSSSC) has biased composition (low complexity).

Belongs to the potassium channel KCNN family. KCa2.3/KCNN3 subfamily. In terms of assembly, homodimer. Heteromultimer with KCNN2 or KCNN1; this modulates plasma membrane expression and consequently the small conductance calcium-activated potassium channel activity. The complex is composed of 4 channel subunits each of which binds to a calmodulin subunit which regulates the channel activity through calcium-binding. Interacts with CALM1. Expressed at low levels in atrial and ventricular myocytes (at protein level).

The protein resides in the cell membrane. It localises to the cytoplasm. The protein localises to the myofibril. Its subcellular location is the sarcomere. It is found in the z line. The catalysed reaction is K(+)(in) = K(+)(out). With respect to regulation, inhibited by bee venom neurotoxin apamin. Functionally, small conductance calcium-activated potassium channel that mediates the voltage-independent transmembrane transfer of potassium across the cell membrane through a constitutive interaction with calmodulin which binds the intracellular calcium allowing its opening. The current is characterized by a voltage-independent activation, an intracellular calcium concentration increase-dependent activation and a single-channel conductance of 10 picosiemens. Also presents an inwardly rectifying current, thus reducing its already small outward conductance of potassium ions, which is particularly the case when the membrane potential displays positive values, above + 20 mV. Activation is followed by membrane hyperpolarization. Thought to regulate neuronal excitability by contributing to the slow component of synaptic afterhyperpolarization. The protein is Small conductance calcium-activated potassium channel protein 3 of Mus musculus (Mouse).